A 414-amino-acid chain; its full sequence is MTFVAASITDNQFDVAIAGGGVVGLVLAAGLRHTGLKIAIIEALPKEQALTKPQAYAISLLSGKILAGLGVWENIKDSIGHFERIQISDNDYRGTVPFAKEDVDELALGHVAEHPVILQALENCVEQCPRIAWFRPAELISFTAGENHKQVTLQQEGREITLQTKLLVAADGARSHTRSLAGIQTKGWKYWQSCVAFTIQHQAPDNTTAFERFCDTGPMGILPLPGDRAQIVWTMPHHKAHTLVNLPEADFITELRQRIGDRLGEFHLINARRLFPVQLMQSDCYVQPRLALVGDAAHCCHPVGGQGLNLGIRDGAALAQVIATAHSQGEDWGSLAVLKRYEHWRKPENWLILGFTDLLDRFFSSHWLPAIALRRFGLEVLRLVPPAKKLALRLMTGLLGRKPQLATGQSLVSQ.

It belongs to the UbiH/COQ6 family. FAD serves as cofactor.

This is an uncharacterized protein from Synechocystis sp. (strain ATCC 27184 / PCC 6803 / Kazusa).